The primary structure comprises 65 residues: Large ribosomal subunit protein bL35 (65 aa).

This sequence belongs to the bacterial ribosomal protein bL35 family.

In Phytoplasma mali (strain AT), this protein is Large ribosomal subunit protein bL35.